The chain runs to 399 residues: Acetate kinase (399 aa).

Asn-7 provides a ligand contact to Mg(2+). Lys-14 lines the ATP pocket. Arg-90 is a substrate binding site. The active-site Proton donor/acceptor is Asp-147. Residues His-207–Gly-211, Asp-282–Arg-284, and Gly-330–Asn-334 contribute to the ATP site. Residue Glu-385 coordinates Mg(2+).

The protein belongs to the acetokinase family. In terms of assembly, homodimer. Requires Mg(2+) as cofactor. It depends on Mn(2+) as a cofactor.

It is found in the cytoplasm. The catalysed reaction is acetate + ATP = acetyl phosphate + ADP. The protein operates within metabolic intermediate biosynthesis; acetyl-CoA biosynthesis; acetyl-CoA from acetate: step 1/2. In terms of biological role, catalyzes the formation of acetyl phosphate from acetate and ATP. Can also catalyze the reverse reaction. The protein is Acetate kinase of Caldicellulosiruptor bescii (strain ATCC BAA-1888 / DSM 6725 / KCTC 15123 / Z-1320) (Anaerocellum thermophilum).